Consider the following 201-residue polypeptide: Large ribosomal subunit protein uL4 (201 aa).

Positions 44 to 68 (RAQKSRADVSGSGRKPWRQKGTGRA) are disordered.

Belongs to the universal ribosomal protein uL4 family. In terms of assembly, part of the 50S ribosomal subunit.

Functionally, one of the primary rRNA binding proteins, this protein initially binds near the 5'-end of the 23S rRNA. It is important during the early stages of 50S assembly. It makes multiple contacts with different domains of the 23S rRNA in the assembled 50S subunit and ribosome. Its function is as follows. Forms part of the polypeptide exit tunnel. The sequence is that of Large ribosomal subunit protein uL4 from Buchnera aphidicola subsp. Schizaphis graminum (strain Sg).